Reading from the N-terminus, the 151-residue chain is Small ribosomal subunit protein uS15y (151 aa).

The protein belongs to the universal ribosomal protein uS15 family.

The chain is Small ribosomal subunit protein uS15y (RPS13B) from Arabidopsis thaliana (Mouse-ear cress).